Consider the following 1022-residue polypeptide: Collagen alpha-2(VI) chain (1022 aa).

Residues Met-1–Ala-27 form the signal peptide. Positions Gln-28–Ala-255 are nonhelical region. A VWFA 1 domain is found at Pro-44 to Ser-168. Residues Asn-141 and Asn-215 are each glycosylated (N-linked (GlcNAc...) asparagine). Residues Gly-256–Thr-590 form a triple-helical region region. A disordered region spans residues Tyr-263–Pro-587. Residues Asp-287–Pro-299 show a composition bias toward low complexity. Basic and acidic residues predominate over residues Lys-306–Arg-318. N-linked (GlcNAc...) asparagine glycosylation occurs at Asn-327. Short sequence motifs (cell attachment site) lie at residues Arg-348–Asp-350 and Arg-366–Asp-368. Residues Gln-363–Arg-377 show a composition bias toward basic and acidic residues. Positions Glu-389 to Pro-399 are enriched in low complexity. 5 short sequence motifs (cell attachment site) span residues Arg-426–Asp-428, Arg-444–Asp-446, Arg-465–Asp-467, Arg-489–Asp-491, and Arg-498–Asp-500. The segment at Gly-514–Gly-519 is interruption in collagenous region. Residues Gly-534 to Gly-543 show a composition bias toward gly residues. A nonhelical region region spans residues Asp-591–Cys-1022. VWFA domains are found at residues Ala-613–Arg-738 and Asp-833–Ser-957. N-linked (GlcNAc...) asparagine glycans are attached at residues Asn-630 and Asn-897.

The protein belongs to the type VI collagen family. As to quaternary structure, trimers composed of three different chains: alpha 1(VI), alpha 2(VI), and alpha 3(VI). Post-translationally, prolines at the third position of the tripeptide repeating unit (G-X-Y) are hydroxylated in some or all of the chains.

The protein localises to the secreted. Its subcellular location is the extracellular space. It localises to the extracellular matrix. Its function is as follows. Collagen VI acts as a cell-binding protein. The sequence is that of Collagen alpha-2(VI) chain (COL6A2) from Gallus gallus (Chicken).